The chain runs to 461 residues: tRNA-2-methylthio-N(6)-dimethylallyladenosine synthase (461 aa).

One can recognise an MTTase N-terminal domain in the interval 25 to 143; that stretch reads PTYSIITHGC…LPYLIDRHLS (119 aa). Residues cysteine 34, cysteine 70, cysteine 104, cysteine 179, cysteine 183, and cysteine 186 each contribute to the [4Fe-4S] cluster site. Residues 165–395 enclose the Radical SAM core domain; sequence RDNEYVGYVN…LDVAYPIFYE (231 aa). Positions 398–461 constitute a TRAM domain; that stretch reads KSYLGTIQEV…SFALTGEMVD (64 aa).

This sequence belongs to the methylthiotransferase family. MiaB subfamily. Monomer. Requires [4Fe-4S] cluster as cofactor.

The protein localises to the cytoplasm. It carries out the reaction N(6)-dimethylallyladenosine(37) in tRNA + (sulfur carrier)-SH + AH2 + 2 S-adenosyl-L-methionine = 2-methylsulfanyl-N(6)-dimethylallyladenosine(37) in tRNA + (sulfur carrier)-H + 5'-deoxyadenosine + L-methionine + A + S-adenosyl-L-homocysteine + 2 H(+). In terms of biological role, catalyzes the methylthiolation of N6-(dimethylallyl)adenosine (i(6)A), leading to the formation of 2-methylthio-N6-(dimethylallyl)adenosine (ms(2)i(6)A) at position 37 in tRNAs that read codons beginning with uridine. This chain is tRNA-2-methylthio-N(6)-dimethylallyladenosine synthase, found in Finegoldia magna (strain ATCC 29328 / DSM 20472 / WAL 2508) (Peptostreptococcus magnus).